A 315-amino-acid polypeptide reads, in one-letter code: 2,3-dihydroxyphenylpropionate/2,3-dihydroxicinnamic acid 1,2-dioxygenase (315 aa).

The Proton donor role is filled by His118. The active-site Proton acceptor is His182.

This sequence belongs to the LigB/MhpB extradiol dioxygenase family. In terms of assembly, homotetramer. It depends on Fe(2+) as a cofactor.

The catalysed reaction is 3-(2,3-dihydroxyphenyl)propanoate + O2 = (2Z,4E)-2-hydroxy-6-oxonona-2,4-dienedioate + H(+). It carries out the reaction (2E)-3-(2,3-dihydroxyphenyl)prop-2-enoate + O2 = (2Z,4E,7E)-2-hydroxy-6-oxonona-2,4,7-trienedioate + H(+). Its pathway is aromatic compound metabolism; 3-phenylpropanoate degradation. Functionally, catalyzes the non-heme iron(II)-dependent oxidative cleavage of 2,3-dihydroxyphenylpropionic acid and 2,3-dihydroxicinnamic acid into 2-hydroxy-6-ketononadienedioate and 2-hydroxy-6-ketononatrienedioate, respectively. The polypeptide is 2,3-dihydroxyphenylpropionate/2,3-dihydroxicinnamic acid 1,2-dioxygenase (Mycolicibacterium gilvum (strain PYR-GCK) (Mycobacterium gilvum (strain PYR-GCK))).